Consider the following 285-residue polypeptide: Zinc transporter ZupT (285 aa).

3 helical membrane passes run 13 to 33, 41 to 61, and 80 to 100; these read AFLL…IAFF, FLCV…MIEM, and WITV…DKFV. Residues Asn153 and Glu156 each contribute to the Fe(2+) site. Position 156 (Glu156) interacts with Zn(2+). Residues 160–180 traverse the membrane as a helical segment; it reads TFVSALEGASLAIPITIAIAI. His181 is a Zn(2+) binding site. Positions 182, 185, and 214 each coordinate Fe(2+). A Zn(2+)-binding site is contributed by Glu185. 3 helical membrane passes run 204–224, 228–248, and 265–285; these read FLYS…GYTL, IFND…MVFI, and LAIY…LLFI.

It belongs to the ZIP transporter (TC 2.A.5) family. ZupT subfamily.

It is found in the cell membrane. The catalysed reaction is Zn(2+)(in) = Zn(2+)(out). Mediates zinc uptake. May also transport other divalent cations. The sequence is that of Zinc transporter ZupT from Clostridium perfringens (strain 13 / Type A).